Reading from the N-terminus, the 773-residue chain is Transducin-like enhancer protein 4 (773 aa).

3 disordered regions span residues 1–22, 140–162, and 182–357; these read MIRDLSKMYPQTRHPAPHQPAQ, HGHGLPVPLTPHPSGLQPPAIPP, and LPIK…DPLA. The interval 1–136 is q domain; that stretch reads MIRDLSKMYP…AIIGQQLQAQ (136 aa). The segment at 137 to 204 is GP domain; the sequence is HLSHGHGLPV…HQRDRDSIKS (68 aa). Residues 183 to 202 show a composition bias toward basic and acidic residues; sequence PIKDEKKHHDNDHQRDRDSI. Over residues 203–214 the composition is skewed to low complexity; that stretch reads KSSSVSPSASFR. Residues 205–274 form a ccN domain region; that stretch reads SSVSPSASFR…SPRGSPAHSP (70 aa). Phosphoserine is present on residues S208, S212, S216, and S222. The segment covering 215-252 has biased composition (basic and acidic residues); the sequence is GSEKHRNSTDYSSESKKQKTEEKEIAARYDSDGEKSDD. K237 is modified (N6-acetyllysine). Position 245 is a phosphoserine (S245). S250 is subject to Phosphoserine; by CK2. S265 is modified (phosphoserine; by CDK1). A phosphoserine mark is found at S269 and S273. The span at 273-289 shows a compositional bias: basic and acidic residues; the sequence is SPRENGLDKTRLLKKDA. An SP domain region spans residues 275-452; that stretch reads RENGLDKTRL…PGGKPAYSFH (178 aa). K281 carries the N6-acetyllysine modification. The span at 290-305 shows a compositional bias: low complexity; that stretch reads PISPASVASSSSTPSS. S292 carries the phosphoserine modification. Over residues 317 to 328 the composition is skewed to polar residues; the sequence is TTPVSKSNTPTP. T318 bears the Phosphothreonine mark. A phosphoserine mark is found at S321 and S323. Residues T325, T327, T334, and T340 each carry the phosphothreonine modification. S419 is modified (phosphoserine). 7 WD repeats span residues 485 to 523, 531 to 570, 575 to 614, 617 to 656, 658 to 697, 699 to 738, and 740 to 773; these read NHGEVVCAVTISNPTRHVYTGGKGCVKVWDISHPGNKSP, NRDNYIRSCRLLPDGRTLIVGGEASTLSIWDLAAPTPRIK, SSAPACYALAISPDSKVCFSCCSDGNIAVWDLHNQTLVRQ, GHTDGASCIDISNDGTKLWTGGLDNTVRSWDLREGRQLQQ, DFTSQIFSLGYCPTGEWLAVGMENSNVEVLHVTKPDKYQL, LHESCVLSLKFAHCGKWFVSTGKDNLLNAWRTPYGASIFQ, and KESSSVLSCDISVDDKYIVTGSGDKKATVYEVIY.

The protein belongs to the WD repeat Groucho/TLE family. Homooligomer and heterooligomer with other family members. Interacts with PAX5. Interacts with LEF1, TCF7, TCF7L1 and TCF7L2. Interacts with ZNF703; TLE4 may mediate ZNF703 transcriptional repression. Interacts with SIX3 and SIX6. Interacts with PAX2. Interacts with TLE1. In terms of processing, phosphorylated. PAX5 binding increases phosphorylation. Post-translationally, ubiquitinated by XIAP/BIRC4. As to expression, expressed in bone marrow-derived macrophages.

It localises to the nucleus. Its function is as follows. Transcriptional corepressor that binds to a number of transcription factors. Inhibits the transcriptional activation mediated by PAX5, and by CTNNB1 and TCF family members in Wnt signaling. The effects of full-length TLE family members may be modulated by association with dominant-negative AES. Essential for the transcriptional repressor activity of SIX3 during retina and lens development and for SIX3 transcriptional auto-repression. Involved in transcriptional repression of GNRHR and enhances MSX1-mediated transcriptional repression of CGA/alpha-GSU. This is Transducin-like enhancer protein 4 (Tle4) from Mus musculus (Mouse).